Consider the following 1963-residue polypeptide: Myosin-4 (1963 aa).

In terms of domain architecture, Myosin N-terminal SH3-like spans 28–77; it reads DSKKNVWIPDPEEGYLAGEITATKGDQVTIVTARGNEVTLKKELVQEMNP. A Myosin motor domain is found at 81–787; the sequence is EKTEDMSNLS…VLAHLEDIRD (707 aa). Lys125 carries the N6,N6,N6-trimethyllysine modification. Position 174-181 (174-181) interacts with ATP; that stretch reads GESGAGKT. Actin-binding stretches follow at residues 662-684 and 766-780; these read LNNL…IPNE and RIGL…GVLA. The segment at 848–1161 is alpha-helical tailpiece (S2); it reads MLKAGKEAEE…LEELGEKLDE (314 aa). The stretch at 848-1963 forms a coiled coil; sequence MLKAGKEAEE…SPSRARASDF (1116 aa). Composition is skewed to basic and acidic residues over residues 970–988 and 1133–1146; these read LRKA…RSLQ and NERQ…RAKS. 2 disordered regions span residues 970 to 990 and 1125 to 1146; these read LRKA…LQDE and SELE…RAKS. A hinge region spans residues 1162–1173; sequence QGGATAAQVEVN. Residues 1162–1963 are light meromyosin (LMM); that stretch reads QGGATAAQVE…SPSRARASDF (802 aa). 2 disordered regions span residues 1317–1336 and 1912–1963; these read LTSQ…RERQ and LEDA…ASDF. Basic and acidic residues predominate over residues 1322 to 1336; that stretch reads EEARRTADEEARERQ.

This sequence belongs to the TRAFAC class myosin-kinesin ATPase superfamily. Myosin family. Muscle myosin is a hexameric protein that consists of 2 heavy chain subunits (MHC), 2 alkali light chain subunits (MLC) and 2 regulatory light chain subunits (MLC-2). Forms a complex composed of chaperone unc-45, unc-54 and ubiquitin-protein ligase ufd-2; promotes poly-ubiquitination of unfolded unc-54. Within the complex interacts with unc-45 (via UCS domain) and ufd-2. Interacts with itr-1 (via c-terminal coiled coil domain). In terms of processing, unfolded unc-54 is poly-ubiquitinated by ufd-2.

The protein resides in the cytoplasm. It localises to the myofibril. Required for muscle contraction. This is Myosin-4 (unc-54) from Caenorhabditis elegans.